A 356-amino-acid polypeptide reads, in one-letter code: DNA polymerase IV (356 aa).

The UmuC domain maps to 4–185 (IIHIDMDCYY…LALGKIPGVG (182 aa)). Mg(2+)-binding residues include aspartate 8 and aspartate 103. Residue glutamate 104 is part of the active site.

This sequence belongs to the DNA polymerase type-Y family. As to quaternary structure, monomer. Mg(2+) is required as a cofactor.

It is found in the cytoplasm. It catalyses the reaction DNA(n) + a 2'-deoxyribonucleoside 5'-triphosphate = DNA(n+1) + diphosphate. Functionally, poorly processive, error-prone DNA polymerase involved in untargeted mutagenesis. Copies undamaged DNA at stalled replication forks, which arise in vivo from mismatched or misaligned primer ends. These misaligned primers can be extended by PolIV. Exhibits no 3'-5' exonuclease (proofreading) activity. May be involved in translesional synthesis, in conjunction with the beta clamp from PolIII. This is DNA polymerase IV from Pseudoalteromonas atlantica (strain T6c / ATCC BAA-1087).